A 237-amino-acid chain; its full sequence is Uridylate kinase (237 aa).

11-14 serves as a coordination point for ATP; the sequence is KLSG. Residue Gly53 participates in UMP binding. ATP-binding residues include Gly54 and Arg58. UMP is bound by residues Asp73 and 134 to 141; that span reads TGNPFFTT. ATP-binding residues include Thr161, Tyr167, and Asp170.

The protein belongs to the UMP kinase family. Homohexamer.

The protein localises to the cytoplasm. The enzyme catalyses UMP + ATP = UDP + ADP. It functions in the pathway pyrimidine metabolism; CTP biosynthesis via de novo pathway; UDP from UMP (UMPK route): step 1/1. With respect to regulation, inhibited by UTP. In terms of biological role, catalyzes the reversible phosphorylation of UMP to UDP. The sequence is that of Uridylate kinase from Burkholderia lata (strain ATCC 17760 / DSM 23089 / LMG 22485 / NCIMB 9086 / R18194 / 383).